A 713-amino-acid chain; its full sequence is Cadherin-13 (713 aa).

Residues Met-1 to Ala-22 form the signal peptide. The propeptide occupies Glu-23–Arg-138. Residues Asn-52 and Asn-86 are each glycosylated (N-linked (GlcNAc...) asparagine). Cadherin domains follow at residues Ser-139–Phe-245, Arg-246–Phe-363, Thr-364–Phe-477, Tyr-478–Ile-585, and Phe-584–Asn-690. 7 N-linked (GlcNAc...) asparagine glycosylation sites follow: Asn-382, Asn-489, Asn-500, Asn-530, Asn-598, Asn-638, and Asn-671. Asn-690 is lipidated: GPI-anchor amidated asparagine. Positions Ala-691–Leu-713 are cleaved as a propeptide — removed in mature form.

By contrast to classical cadherins, homodimerization in trans is not mediated by cadherin EC1 domain strand-swapping, but instead through a homophilic adhesive interface which joins two elongated EC1-EC2 domains through a region near their Ca2+-binding sites to form a tetrahedral, X-like shape.

It is found in the cell membrane. It localises to the cytoplasm. In terms of biological role, cadherins are calcium-dependent cell adhesion proteins. They preferentially interact with themselves in a homophilic manner in connecting cells; cadherins may thus contribute to the sorting of heterogeneous cell types. May act as a negative regulator of neural cell growth. The protein is Cadherin-13 (CDH13) of Pongo abelii (Sumatran orangutan).